The chain runs to 67 residues: Protein AaeX (67 aa).

The next 2 helical transmembrane spans lie at 3–23 (LFPVIVIFGLSFPPIFFELLL) and 43–63 (FVWHPALFNTALYCCLFYLLS).

Belongs to the AaeX family.

It localises to the cell membrane. This chain is Protein AaeX, found in Cronobacter sakazakii (strain ATCC BAA-894) (Enterobacter sakazakii).